The sequence spans 64 residues: Delta-buthitoxin-Hj2a (64 aa).

Cystine bridges form between Cys-12/Cys-63, Cys-16/Cys-36, Cys-22/Cys-46, and Cys-26/Cys-48. At Arg-64 the chain carries Arginine amide.

Belongs to the long (4 C-C) scorpion toxin superfamily. Sodium channel inhibitor family. Alpha subfamily. As to expression, expressed by the venom gland.

It is found in the secreted. This non-amidated recombinant toxin slows fast inactivation on Nav1.1/SCN1A (EC(50)=52.8 nM), Nav1.4/SN4A (EC(50)=32 nM), Nav1.5/SCN5A (EC(50)=116.7 nM), Nav1.6/SCN8A (EC(50)=46.3 nM), and Nav1.7/SCN9A (EC(50)=147.4 nM) voltage-gated sodium channels. On Nav1.1/SCN1A channel, acts as an agonist by inducing a shift in both the voltage dependence of channel inactivation (alpha-toxin activity) and activation (beta-toxin activity). This is Delta-buthitoxin-Hj2a from Hottentotta judaicus (Black scorpion).